A 261-amino-acid polypeptide reads, in one-letter code: Cytochrome c oxidase subunit 3 (261 aa).

Residues 1–15 (MAHQAHAYHMVDPSP) lie on the Mitochondrial matrix side of the membrane. The chain crosses the membrane as a helical span at residues 16–34 (WPLTGAVAALLMSSGLAIW). Over 35–40 (FHLHSM) the chain is Mitochondrial intermembrane. A helical transmembrane segment spans residues 41–66 (TLIVLGMILLILTMIQWWRDIIREGT). Residues 67–72 (FQGHHT) lie on the Mitochondrial matrix side of the membrane. The helical transmembrane segment at 73-105 (PPVQKGLRYGMILFITSEVFFFLGFFWAFYHSS) threads the bilayer. The Mitochondrial intermembrane segment spans residues 106–128 (LAPTPELGGCWPPTGLTTLDPFE). The chain crosses the membrane as a helical span at residues 129–152 (VPLLNTAVLLASGVTVTWAHHSLM). The Mitochondrial matrix segment spans residues 153–155 (EGE). The chain crosses the membrane as a helical span at residues 156 to 183 (RKQAIQSLALTILLGLYFTALQAMEYYE). The Mitochondrial intermembrane segment spans residues 184–190 (APFTIAD). Residues 191–223 (GVYGSTFFVATGFHGLHVIIGSTFLAVCLLRQV) traverse the membrane as a helical segment. The Mitochondrial matrix portion of the chain corresponds to 224 to 232 (LFHFTSDHH). The chain crosses the membrane as a helical span at residues 233–256 (FGFEAAAWYWHFVDVVWLFLYVSI). Topologically, residues 257 to 261 (YWWGS) are mitochondrial intermembrane.

Belongs to the cytochrome c oxidase subunit 3 family. Component of the cytochrome c oxidase (complex IV, CIV), a multisubunit enzyme composed of 14 subunits. The complex is composed of a catalytic core of 3 subunits MT-CO1, MT-CO2 and MT-CO3, encoded in the mitochondrial DNA, and 11 supernumerary subunits COX4I, COX5A, COX5B, COX6A, COX6B, COX6C, COX7A, COX7B, COX7C, COX8 and NDUFA4, which are encoded in the nuclear genome. The complex exists as a monomer or a dimer and forms supercomplexes (SCs) in the inner mitochondrial membrane with NADH-ubiquinone oxidoreductase (complex I, CI) and ubiquinol-cytochrome c oxidoreductase (cytochrome b-c1 complex, complex III, CIII), resulting in different assemblies (supercomplex SCI(1)III(2)IV(1) and megacomplex MCI(2)III(2)IV(2)).

It localises to the mitochondrion inner membrane. It carries out the reaction 4 Fe(II)-[cytochrome c] + O2 + 8 H(+)(in) = 4 Fe(III)-[cytochrome c] + 2 H2O + 4 H(+)(out). Its function is as follows. Component of the cytochrome c oxidase, the last enzyme in the mitochondrial electron transport chain which drives oxidative phosphorylation. The respiratory chain contains 3 multisubunit complexes succinate dehydrogenase (complex II, CII), ubiquinol-cytochrome c oxidoreductase (cytochrome b-c1 complex, complex III, CIII) and cytochrome c oxidase (complex IV, CIV), that cooperate to transfer electrons derived from NADH and succinate to molecular oxygen, creating an electrochemical gradient over the inner membrane that drives transmembrane transport and the ATP synthase. Cytochrome c oxidase is the component of the respiratory chain that catalyzes the reduction of oxygen to water. Electrons originating from reduced cytochrome c in the intermembrane space (IMS) are transferred via the dinuclear copper A center (CU(A)) of subunit 2 and heme A of subunit 1 to the active site in subunit 1, a binuclear center (BNC) formed by heme A3 and copper B (CU(B)). The BNC reduces molecular oxygen to 2 water molecules using 4 electrons from cytochrome c in the IMS and 4 protons from the mitochondrial matrix. This is Cytochrome c oxidase subunit 3 (mt-co3) from Danio rerio (Zebrafish).